The sequence spans 265 residues: Large ribosomal subunit protein bL9m (265 aa).

Residues 1–49 (MAASVAPGVRTLWWAGAAWLRQGGIRELFRPRIEGSTPGRDFSLSHYQS) constitute a mitochondrion transit peptide.

Belongs to the bacterial ribosomal protein bL9 family. Component of the mitochondrial ribosome large subunit (39S) which comprises a 16S rRNA and about 50 distinct proteins.

The protein localises to the mitochondrion. In Mus musculus (Mouse), this protein is Large ribosomal subunit protein bL9m (Mrpl9).